Consider the following 503-residue polypeptide: Na(+)-translocating NADH-quinone reductase subunit B (503 aa).

The next 4 membrane-spanning stretches (helical) occupy residues Met-55–Val-75, Ile-120–Ile-142, Thr-161–Val-181, and Phe-186–Phe-206. Position 248 is an FMN phosphoryl threonine (Thr-248). Helical transmembrane passes span Thr-361–Trp-381, Phe-387–Gly-407, Phe-417–Met-437, Trp-452–Tyr-472, and Gly-475–Val-495.

It belongs to the NqrB/RnfD family. Composed of six subunits; NqrA, NqrB, NqrC, NqrD, NqrE and NqrF. It depends on FMN as a cofactor.

The protein resides in the cell inner membrane. The enzyme catalyses a ubiquinone + n Na(+)(in) + NADH + H(+) = a ubiquinol + n Na(+)(out) + NAD(+). NQR complex catalyzes the reduction of ubiquinone-1 to ubiquinol by two successive reactions, coupled with the transport of Na(+) ions from the cytoplasm to the periplasm. NqrA to NqrE are probably involved in the second step, the conversion of ubisemiquinone to ubiquinol. In Chlamydia felis (strain Fe/C-56) (Chlamydophila felis), this protein is Na(+)-translocating NADH-quinone reductase subunit B.